A 397-amino-acid chain; its full sequence is Trans-2-enoyl-CoA reductase [NADH] (397 aa).

Residues 53–58, 79–80, 116–117, and 144–145 each bind NAD(+); these read GCSNGY, FE, DA, and LA. Substrate is bound at residue tyrosine 230. Catalysis depends on tyrosine 240, which acts as the Proton donor. NAD(+)-binding positions include lysine 249 and 276 to 278; that span reads LVT.

It belongs to the TER reductase family. As to quaternary structure, monomer.

The catalysed reaction is a 2,3-saturated acyl-CoA + NAD(+) = a (2E)-enoyl-CoA + NADH + H(+). It functions in the pathway lipid metabolism; fatty acid biosynthesis. Inhibited by lauroyl-CoA. Its function is as follows. Involved in the fatty acid synthesis (FAS II). Catalyzes the reduction of the carbon-carbon double bond of crotonyl-CoA to yield butyryl-CoA. In vitro it can also use hexenoyl-CoA and dodecenoyl-CoA as substrates. The chain is Trans-2-enoyl-CoA reductase [NADH] from Treponema denticola (strain ATCC 35405 / DSM 14222 / CIP 103919 / JCM 8153 / KCTC 15104).